A 437-amino-acid chain; its full sequence is Aspartokinase (437 aa).

The protein belongs to the aspartokinase family.

The catalysed reaction is L-aspartate + ATP = 4-phospho-L-aspartate + ADP. It participates in amino-acid biosynthesis; L-lysine biosynthesis via DAP pathway; (S)-tetrahydrodipicolinate from L-aspartate: step 1/4. Its pathway is amino-acid biosynthesis; L-methionine biosynthesis via de novo pathway; L-homoserine from L-aspartate: step 1/3. It functions in the pathway amino-acid biosynthesis; L-threonine biosynthesis; L-threonine from L-aspartate: step 1/5. The protein is Aspartokinase (lysC) of Chlamydia muridarum (strain MoPn / Nigg).